Here is a 244-residue protein sequence, read N- to C-terminus: Putative esophageal gland cell secretory protein 6 (244 aa).

An N-terminal signal peptide occupies residues 1–22 (MDRRFTVFLVIALVTSIYEVLS). Cysteine 88 and cysteine 91 are joined by a disulfide.

It belongs to the SelWTH family. SELT subfamily.

The polypeptide is Putative esophageal gland cell secretory protein 6 (HSP6) (Heterodera glycines (Soybean cyst nematode worm)).